Consider the following 299-residue polypeptide: Oxygen-dependent coproporphyrinogen-III oxidase (299 aa).

Ser-92 is a binding site for substrate. Positions 96 and 106 each coordinate a divalent metal cation. His-106 functions as the Proton donor in the catalytic mechanism. Residue 108–110 (NVR) coordinates substrate. Positions 145 and 175 each coordinate a divalent metal cation. Residues 240–275 (YVEFNLVWDRGTLFGLQTGGRTESILMSMPPLVRWE) form an important for dimerization region. 258–260 (GGR) provides a ligand contact to substrate.

Belongs to the aerobic coproporphyrinogen-III oxidase family. In terms of assembly, homodimer. It depends on a divalent metal cation as a cofactor.

It is found in the cytoplasm. The enzyme catalyses coproporphyrinogen III + O2 + 2 H(+) = protoporphyrinogen IX + 2 CO2 + 2 H2O. Its pathway is porphyrin-containing compound metabolism; protoporphyrin-IX biosynthesis; protoporphyrinogen-IX from coproporphyrinogen-III (O2 route): step 1/1. Involved in the heme biosynthesis. Catalyzes the aerobic oxidative decarboxylation of propionate groups of rings A and B of coproporphyrinogen-III to yield the vinyl groups in protoporphyrinogen-IX. This chain is Oxygen-dependent coproporphyrinogen-III oxidase, found in Klebsiella pneumoniae (strain 342).